A 230-amino-acid polypeptide reads, in one-letter code: Cytidylate kinase (230 aa).

12–20 (GPSGAGKGT) lines the ATP pocket.

Belongs to the cytidylate kinase family. Type 1 subfamily.

Its subcellular location is the cytoplasm. The enzyme catalyses CMP + ATP = CDP + ADP. It catalyses the reaction dCMP + ATP = dCDP + ADP. This chain is Cytidylate kinase, found in Aeromonas salmonicida (strain A449).